Here is a 772-residue protein sequence, read N- to C-terminus: Cadherin-19 (772 aa).

A signal peptide spans 1–21; it reads MNCYLLLRFMLGIPLLWPCLG. Positions 22–43 are excised as a propeptide; sequence ATENSQTKKVKQPVRSHLRVKR. Cadherin domains are found at residues 44–148, 149–256, 257–370, 371–470, and 470–581; these read GWVW…EPKF, LDEP…KPIF, KESL…PPLF, LLPY…APEF, and FSQY…STQT. At 44–596 the chain is on the extracellular side; it reads GWVWNQFFVP…LVLSMGFKTE (553 aa). N57 and N74 each carry an N-linked (GlcNAc...) asparagine glycan. 6 N-linked (GlcNAc...) asparagine glycosylation sites follow: N419, N437, N508, N515, N516, and N534. Residues 597 to 617 traverse the membrane as a helical segment; sequence VIIAILICIMIIFGFIFLTLG. Over 618-772 the chain is Cytoplasmic; the sequence is LKQRRKQILF…MFGSAVQSNN (155 aa).

Expressed in many tissues, with the exception of uterus.

It is found in the cell membrane. Functionally, cadherins are calcium-dependent cell adhesion proteins. They preferentially interact with themselves in a homophilic manner in connecting cells; cadherins may thus contribute to the sorting of heterogeneous cell types. The sequence is that of Cadherin-19 (CDH19) from Homo sapiens (Human).